The sequence spans 476 residues: Serine/threonine-protein kinase Chk1 (476 aa).

A Protein kinase domain is found at 9 to 265; the sequence is WDLVQTLGEG…IPDIKKDRWY (257 aa). Residues 15–23 and Lys-38 contribute to the ATP site; that span reads LGEGAYGEV. The Proton acceptor role is filled by Asp-130. The interval 272-329 is disordered; sequence GTKRGRVSSGGVTESPGALPKHIRSDTDFSPVKSALGEDKASYSTSQPEPGTGGALWD. Ser-280 bears the Phosphoserine; by PKB/AKT1 mark. Residue Ser-296 is modified to Phosphoserine. The residue at position 317 (Ser-317) is a Phosphoserine; by ATM and ATR. Phosphoserine is present on Ser-345. Residues 391-476 are autoinhibitory region; that stretch reads RSLRDVCEKM…STQKVWLPPP (86 aa).

The protein belongs to the protein kinase superfamily. CAMK Ser/Thr protein kinase family. NIM1 subfamily. Phosphorylated by ATR in a RAD17-dependent manner in response to ultraviolet irradiation and inhibition of DNA replication. Phosphorylated by ATM in response to ionizing irradiation. Phosphorylation at Ser-345 induces a change in the conformation of the protein and activates the kinase activity. Phosphorylation at Ser-345 also increases binding to 14-3-3 proteins and promotes nuclear retention.

The protein localises to the nucleus. The protein resides in the chromosome. It localises to the cytoplasm. It is found in the cytoskeleton. Its subcellular location is the microtubule organizing center. The protein localises to the centrosome. It catalyses the reaction L-seryl-[protein] + ATP = O-phospho-L-seryl-[protein] + ADP + H(+). It carries out the reaction L-threonyl-[protein] + ATP = O-phospho-L-threonyl-[protein] + ADP + H(+). Its activity is regulated as follows. Activated through phosphorylation by atr or atm in response to DNA damage or inhibition of DNA replication. Its function is as follows. Serine/threonine-protein kinase which is required for checkpoint-mediated cell cycle arrest and activation of DNA repair in response to the presence of DNA damage or unreplicated DNA. May also negatively regulate cell cycle progression during unperturbed cell cycles. This regulation is achieved by a number of mechanisms that together help to preserve the integrity of the genome. Recognizes the substrate consensus sequence [R-X-X-S/T]. Binds to and phosphorylates CDC25A, CDC25B and CDC25C. This inhibits their activity through proteasomal degradation, nucleo-cytoplasmic shuttling and inhibition by proteins of the 13-3-3 family. Inhibition of CDC25 leads to increased inhibitory tyrosine phosphorylation of CDK-cyclin complexes and blocks cell cycle progression. May promote DNA repair, regulate chromatin assembly and the transcription of genes that regulate cell-cycle progression. May also play a role in replication fork maintenance. The polypeptide is Serine/threonine-protein kinase Chk1 (CHEK1) (Gallus gallus (Chicken)).